The chain runs to 123 residues: Small ribosomal subunit protein uS13 (123 aa).

The interval 97–123 is disordered; sequence PVRGQKTKTNARTRKGPKKTVGRKKKK. Residues 101–123 show a composition bias toward basic residues; sequence QKTKTNARTRKGPKKTVGRKKKK.

Belongs to the universal ribosomal protein uS13 family. In terms of assembly, part of the 30S ribosomal subunit. Forms a loose heterodimer with protein S19. Forms two bridges to the 50S subunit in the 70S ribosome.

Located at the top of the head of the 30S subunit, it contacts several helices of the 16S rRNA. In the 70S ribosome it contacts the 23S rRNA (bridge B1a) and protein L5 of the 50S subunit (bridge B1b), connecting the 2 subunits; these bridges are implicated in subunit movement. Contacts the tRNAs in the A and P-sites. This is Small ribosomal subunit protein uS13 from Alkaliphilus oremlandii (strain OhILAs) (Clostridium oremlandii (strain OhILAs)).